The following is a 728-amino-acid chain: E3 ubiquitin-protein ligase LNX (728 aa).

The segment at 45-83 (CHICLQALLDPLDTPCGHTYCTLCLTNFLVEKDFCPVDR) adopts an RING-type zinc-finger fold. An NPXY motif motif is present at residues 185–188 (NPAY). The disordered stretch occupies residues 185–220 (NPAYVSSVEDGEPVANSSDSGRSNRTRARPFERSTM). The segment at 186–244 (PAYVSSVEDGEPVANSSDSGRSNRTRARPFERSTMRSRSFKKINRALSALRRTKSGSVV) is interaction with MAGEB18. 2 PDZ domains span residues 278–362 (SIKI…VLRE) and 385–467 (HVIL…VSRQ). Phosphoserine is present on serine 445. A disordered region spans residues 481 to 500 (WISNGQQSPGPGERNTASKP). PDZ domains follow at residues 508–593 (VVSV…ALEV) and 638–723 (DVIL…IASW).

As to quaternary structure, interacts with CXADR. Interacts with MAGEB18 and MAGEF1. Interacts with the phosphotyrosine interaction domain of all isoforms of NUMB. IGSF5/JAM4 interacts with isoform 2 through the second PDZ domain, other isoforms may also interact with IGSF5/JAM4. As to expression, isoform 1 and isoform 2 are expressed in the heart. Isoform 1 is also expressed in kidney, lung and skeletal muscle while isoform 2 is also expressed in brain.

Its subcellular location is the cytoplasm. The catalysed reaction is S-ubiquitinyl-[E2 ubiquitin-conjugating enzyme]-L-cysteine + [acceptor protein]-L-lysine = [E2 ubiquitin-conjugating enzyme]-L-cysteine + N(6)-ubiquitinyl-[acceptor protein]-L-lysine.. It participates in protein modification; protein ubiquitination. E3 ubiquitin-protein ligase that mediates ubiquitination and subsequent proteasomal degradation of NUMB. E3 ubiquitin ligases accept ubiquitin from an E2 ubiquitin-conjugating enzyme in the form of a thioester and then directly transfers the ubiquitin to targeted substrates. Mediates ubiquitination of isoform p66 and isoform p72 of NUMB, but not that of isoform p71 or isoform p65. Functionally, isoform 2 provides an endocytic scaffold for IGSF5/JAM4. This Mus musculus (Mouse) protein is E3 ubiquitin-protein ligase LNX (Lnx1).